The following is an 86-amino-acid chain: MSTMNTLAFCYGLPNINDITQGIIFVRNNIFYSYLTDYAMEACILNYINIRADKIEDLKKSLVGKTISVRVIRVDVLKGYIDVSIV.

One can recognise an S1 motif domain in the interval 15 to 86 (NINDITQGII…LKGYIDVSIV (72 aa)).

Belongs to the poxviridae K3 protein family. In terms of assembly, interacts with host PKR kinase.

Viral mimic of eIF-2-alpha that acts as a pseudosubstrate for EIF2AK2/PKR kinase. Inhibits therefore eIF-2-alpha phosphorylation by host EIF2AK2/PKR kinase and prevents protein synthesis shutoff. This Sus scrofa (Pig) protein is Protein K3 homolog.